A 98-amino-acid polypeptide reads, in one-letter code: Citrate lyase acyl carrier protein (98 aa).

At S14 the chain carries O-(phosphoribosyl dephospho-coenzyme A)serine.

It belongs to the CitD family. In terms of assembly, oligomer with a subunit composition of (alpha,beta,gamma)6.

The protein localises to the cytoplasm. Its function is as follows. Covalent carrier of the coenzyme of citrate lyase. The protein is Citrate lyase acyl carrier protein of Escherichia coli O127:H6 (strain E2348/69 / EPEC).